We begin with the raw amino-acid sequence, 736 residues long: Na(+)/H(+) antiporter NhaA (736 aa).

The na(+)/H(+) antiporter NhaA stretch occupies residues 1 to 387 (MNHSPQSARP…ICGYLLLRAA (387 aa)). The next 11 helical transmembrane spans lie at 23–43 (AGGI…NSPF), 58–78 (LSLA…LVGL), 96–116 (MLPG…FAVL), 126–146 (GWAV…SLLG), 155–175 (VFLA…IAIF), 178–198 (AEIS…LFVM), 201–221 (MDVV…FFVF), 265–285 (VAFI…FKGL), 298–318 (ILLG…WLAI), 334–354 (LYGV…IGLL), and 367–387 (IGVL…LRAA). The peptidase S49 stretch occupies residues 388–736 (RPDQSAANPL…EKAIWARYGL (349 aa)).

This sequence in the N-terminal section; belongs to the NhaA Na(+)/H(+) (TC 2.A.33) antiporter family. It in the C-terminal section; belongs to the peptidase S49 family.

It localises to the cell inner membrane. The catalysed reaction is Na(+)(in) + 2 H(+)(out) = Na(+)(out) + 2 H(+)(in). In terms of biological role, na(+)/H(+) antiporter that extrudes sodium in exchange for external protons. In Brucella melitensis biotype 1 (strain ATCC 23456 / CCUG 17765 / NCTC 10094 / 16M), this protein is Na(+)/H(+) antiporter NhaA.